The chain runs to 443 residues: Proline--tRNA ligase (443 aa).

Belongs to the class-II aminoacyl-tRNA synthetase family. ProS type 2 subfamily. In terms of assembly, homodimer.

It localises to the cytoplasm. It carries out the reaction tRNA(Pro) + L-proline + ATP = L-prolyl-tRNA(Pro) + AMP + diphosphate. Its function is as follows. Catalyzes the attachment of proline to tRNA(Pro) in a two-step reaction: proline is first activated by ATP to form Pro-AMP and then transferred to the acceptor end of tRNA(Pro). This chain is Proline--tRNA ligase, found in Methylobacterium nodulans (strain LMG 21967 / CNCM I-2342 / ORS 2060).